The sequence spans 1324 residues: Synaptojanin-1 (1324 aa).

Residues 119-442 form the SAC domain; sequence VRKVLNSGNF…GDSISKIYAG (324 aa). A catalytic region spans residues 475–859; sequence AIDVLLLGNT…GRAELKTSDH (385 aa). A phosphoserine mark is found at S820 and S830. In terms of domain architecture, RRM spans 902–971; sequence SSLPENNFFN…RTITITLKSP (70 aa). The disordered stretch occupies residues 1030–1324; sequence LQPSSSSALA…SDPFEDLSLN (295 aa). Residues 1080 to 1103 are compositionally biased toward polar residues; the sequence is ASQSSPVDTLPATQLQQKDSSQTL. Residues 1108-1130 show a composition bias toward pro residues; it reads PPPPRPVAPPARPAPPQRPPPPS. Over residues 1138 to 1156 the composition is skewed to basic and acidic residues; it reads ARERVWSTRKAQERPRRDN. R1186 is modified (omega-N-methylarginine). Residue T1205 is modified to Phosphothreonine. S1277 bears the Phosphoserine mark. Residues 1278–1292 show a composition bias toward low complexity; it reads SHSLPSDAPAAAAGA.

Belongs to the synaptojanin family. The protein in the central section; belongs to the inositol 1,4,5-trisphosphate 5-phosphatase family. In terms of assembly, interacts with ASH/GRB2. Interacts with PACSIN1, PACSIN2 and PACSIN3. Interacts with AMPH, SH3GL1, SH3GL2 and SH3GL3. Interacts with MYO1E (via SH3 domain). Interacts with BIN1 and DNM1. Interacts with EPS15. In terms of tissue distribution, ubiquitously expressed with highest levels in brain.

It is found in the cytoplasm. The protein resides in the perinuclear region. The catalysed reaction is a 1,2-diacyl-sn-glycero-3-phospho-(1D-myo-inositol-4,5-bisphosphate) + H2O = a 1,2-diacyl-sn-glycero-3-phospho-(1D-myo-inositol 4-phosphate) + phosphate. In terms of biological role, phosphatase that acts on various phosphoinositides, including phosphatidylinositol 4-phosphate, phosphatidylinositol (4,5)-bisphosphate and phosphatidylinositol (3,4,5)-trisphosphate. Has a role in clathrin-mediated endocytosis. Hydrolyzes PIP2 bound to actin regulatory proteins resulting in the rearrangement of actin filaments downstream of tyrosine kinase and ASH/GRB2. The polypeptide is Synaptojanin-1 (SYNJ1) (Bos taurus (Bovine)).